A 379-amino-acid chain; its full sequence is MGFLVLLLFSLLGLSSSSSISTHRSILDLDLTKFTTQKQVSSLFQLWKSEHGRVYHNHEEEAKRLEIFKNNSNYIRDMNANRKSPHSHRLGLNKFADITPQEFSKKYLQAPKDVSQQIKMANKKMKKEQYSCDHPPASWDWRKKGVITQVKYQGGCGRGWAFSATGAIEAAHAIATGDLVSLSEQELVDCVEESEGSYNGWQYQSFEWVLEHGGIATDDDYPYRAKEGRCKANKIQDKVTIDGYETLIMSDESTESETEQAFLSAILEQPISVSIDAKDFHLYTGGIYDGENCTSPYGINHFVLLVGYGSADGVDYWIAKNSWGFDWGEDGYIWIQRNTGNLLGVCGMNYFASYPTKEESETLVSARVKGHRRVDHSPL.

The signal sequence occupies residues 1 to 23 (MGFLVLLLFSLLGLSSSSSISTH). Positions 24–122 (RSILDLDLTK…DVSQQIKMAN (99 aa)) are cleaved as a propeptide — activation peptide. N70 is a glycosylation site (N-linked (GlcNAc...) asparagine). The cysteines at positions 190 and 230 are disulfide-linked. N292 is a glycosylation site (N-linked (GlcNAc...) asparagine). The cysteines at positions 293 and 346 are disulfide-linked. Catalysis depends on residues H301 and N321.

This sequence belongs to the peptidase C1 family. Homodimer; disulfide-linked. Post-translationally, N-glycosylated on its propeptide.

It is found in the vacuole. Its function is as follows. Probable thiol protease. In Glycine max (Soybean), this protein is P34 probable thiol protease.